Consider the following 192-residue polypeptide: 7-methyl-GTP pyrophosphatase (192 aa).

Residue Asp69 is the Proton acceptor of the active site.

Belongs to the Maf family. YceF subfamily. A divalent metal cation serves as cofactor.

The protein localises to the cytoplasm. The enzyme catalyses N(7)-methyl-GTP + H2O = N(7)-methyl-GMP + diphosphate + H(+). Nucleoside triphosphate pyrophosphatase that hydrolyzes 7-methyl-GTP (m(7)GTP). May have a dual role in cell division arrest and in preventing the incorporation of modified nucleotides into cellular nucleic acids. The sequence is that of 7-methyl-GTP pyrophosphatase (maf-1) from Pseudomonas syringae pv. tomato (strain ATCC BAA-871 / DC3000).